Here is a 263-residue protein sequence, read N- to C-terminus: MLIEQITQALTAVRQQKPLVVNITNYVVMNNTANALLAIGASPIMAHSKQEMVEMMSFAGALVINIGTLDSVWTPRMSYAVEQANANGKIVVLDPVGCGASSLRTETSREIARLADKLIIRGNASEIIALAGEQAQSKGVDALDSSDAALGAANFLVAEYGASVVISGETDYIVTKGQTVQLNNGHEMMPYVTGMGCTLSALTGAFAAVGDDTGLAAAAVLGVVGEIAAEQARGPGSLQMNLLDELYQLDEETLAKRLKMQVS.

M45 provides a ligand contact to substrate. ATP contacts are provided by R121 and S167. G194 provides a ligand contact to substrate.

The protein belongs to the Thz kinase family. Requires Mg(2+) as cofactor.

The catalysed reaction is 5-(2-hydroxyethyl)-4-methylthiazole + ATP = 4-methyl-5-(2-phosphooxyethyl)-thiazole + ADP + H(+). The protein operates within cofactor biosynthesis; thiamine diphosphate biosynthesis; 4-methyl-5-(2-phosphoethyl)-thiazole from 5-(2-hydroxyethyl)-4-methylthiazole: step 1/1. Functionally, catalyzes the phosphorylation of the hydroxyl group of 4-methyl-5-beta-hydroxyethylthiazole (THZ). This Vibrio campbellii (strain ATCC BAA-1116) protein is Hydroxyethylthiazole kinase.